Consider the following 349-residue polypeptide: MPSNPKRFQIAAKNYFLTYPNCSLSKEEALDQLQRLQTPTNKKYIKVARELHENGEPHLHVLIQFEGKFNCKNQRFFDLVSPTRSTHFHPNIQGAKSSSDVNSYVDKDGDTIEWGEFQIDARSARGGQQTANDECAEALNRSSKEEALQIIKEKLPKDFLFCYHNLVSNLDRIFTPAPTPFVPPFQLSSFTNVPEDMQEWADDYFGVSAAARPMRYKSIIIEGESRTGKTMWARSLGPHNYLSGHLDFNSRVYSNSALYNVIDDVTPHYLKLKHWKELIGAQRDWQSNCKYGKPVQIKGGIPSIVLCNPGGDTSFQDFLDKEENEALKDWTLYNAVFIKLTEPLYDGTV.

The 109-residue stretch at 9–117 (QIAAKNYFLT…DGDTIEWGEF (109 aa)) folds into the CRESS-DNA virus Rep endonuclease domain. Residues 16–19 (FLTY) carry the RCR-1 motif. A divalent metal cation is bound by residues E50, H58, and H60. Positions 58-60 (HLH) match the RCR-2 motif. The active-site For DNA cleavage activity is Y104. The RCR-3 motif lies at 104 to 107 (YVDK). D108 provides a ligand contact to a divalent metal cation. The binding to RBR1 stretch occupies residues 144–154 (KEEALQIIKEK). The interval 157-177 (KDFLFCYHNLVSNLDRIFTPA) is oligomerization. 223 to 230 (GESRTGKT) is a binding site for ATP.

The protein belongs to the geminiviridae Rep protein family. In terms of assembly, homooligomer. Interacts with the replication enhancer protein (REn). Interacts with host retinoblastoma-related protein 1 (RBR1), and may thereby induce the transcription of host replicative enzymes even if the cell is not dividing anymore. Interacts with host PCNA. Interacts with host SCE1 protein. Requires Mg(2+) as cofactor. Mn(2+) serves as cofactor.

Its subcellular location is the host nucleus. Functionally, essential for the replication of viral ssDNA. The closed circular ssDNA genome is first converted to a superhelical dsDNA. Rep binds a specific region at the genome origin of replication. It introduces an endonucleolytic nick within the conserved sequence 5'-TAATATTAC-3' in the intergenic region of the genome present in all geminiviruses, thereby initiating the rolling circle replication (RCR). Following cleavage, binds covalently to the 5'-phosphate of DNA as a tyrosyl ester. The cleavage gives rise to a free 3'-OH that serves as a primer for the cellular DNA polymerase. The polymerase synthesizes the (+) strand DNA by rolling circle mechanism. After one round of replication, a Rep-catalyzed nucleotidyl transfer reaction releases a circular single-stranded virus genome, thereby terminating the replication. Displays origin-specific DNA cleavage, nucleotidyl transferase, ATPase and helicase activities. In Solanum lycopersicum (Tomato), this protein is Replication-associated protein.